The chain runs to 681 residues: MKKKANEEKAPKRAKQEAKTEATQENKAKESNKENKNNKAKEGKIKEAKTKESKVKETAKEPIPVKKLSFNEALEELFANSLSDCVSYESIIQISAKVPTLAQIKKIKELCQKYQKKLVSSSEYAKKLNAIDKIKNTEEKQKVLDEELEDGYDFLKEKDFLEWSRSDSPVRMYLREMGDIKLLSKDEEIELSKQIRLGEDIILDAICSVPYLIDFIYAYKDALINRERRVKELFRSFDDDDENSVSDPKKDDDSEEDEENEERKKVVSEKDKKRVEKVQESFKALDKAKKEWLKALEAPIDEKEDELVRSLTLAYKRQTLKDRLYDLEPTSKLINELVKTMETTLKSGDGFEKELKRLEYKLPLFNDTLIANHKKILANITNMTKEDIIAQVPEATMVSVYMDLKKLFLTKEASEEGFDLAPNKLKEILEQIKRGKLISDRAKNKMAKSNLRLVVSIAKRFTSRGLPFLDLIQEGNIGLMKAVDKFEHEKGFKFSTYATWWIKQAISRAIADQARTIRIPIHMIDTINRINKVMRKHIQETGKEPDLEVVAEEVGLSLDKVKNVIKVTKEPISLETPVGNDDDGKFGDFVEDKNIVSSIDHIMREDLKAQIESVLDQLNEREKAVIRMRFGLLDDESDRTLEEIGKELNVTRERVRQIESSAIKKLRSPQYGRILRNYLRI.

Disordered regions lie at residues 1–60 and 239–270; these read MKKK…ETAK and DDDENSVSDPKKDDDSEEDEENEERKKVVSEK. Basic and acidic residues predominate over residues 261–270; sequence EERKKVVSEK. The segment at 446–516 is sigma-70 factor domain-2; that stretch reads MAKSNLRLVV…SRAIADQART (71 aa). The Interaction with polymerase core subunit RpoC signature appears at 470-473; it reads DLIQ. Residues 525-601 form a sigma-70 factor domain-3 region; that stretch reads DTINRINKVM…DKNIVSSIDH (77 aa). The interval 614–668 is sigma-70 factor domain-4; that stretch reads VLDQLNEREKAVIRMRFGLLDDESDRTLEEIGKELNVTRERVRQIESSAIKKLRS. The H-T-H motif DNA-binding region spans 641–660; it reads LEEIGKELNVTRERVRQIES.

Belongs to the sigma-70 factor family. RpoD/SigA subfamily. As to quaternary structure, interacts transiently with the RNA polymerase catalytic core.

Its subcellular location is the cytoplasm. Its function is as follows. Sigma factors are initiation factors that promote the attachment of RNA polymerase to specific initiation sites and are then released. This sigma factor is the primary sigma factor during exponential growth. The polypeptide is RNA polymerase sigma factor RpoD (Helicobacter pylori (strain J99 / ATCC 700824) (Campylobacter pylori J99)).